The primary structure comprises 242 residues: Venom nerve growth factor 1 (242 aa).

A signal peptide spans 1–18 (MSMLCYTLIIAFLIGIWA). Positions 19 to 125 (APKSEDNVPL…ALNRNIRSKR (107 aa)) are excised as a propeptide. The tract at residues 26–69 (VPLGSPATSDLSDTSCAQTHKALKTSRNTDQRHPAPKKAEDQEL) is disordered. A compositionally biased stretch (polar residues) spans 31-43 (PATSDLSDTSCAQ). Basic and acidic residues predominate over residues 52–66 (RNTDQRHPAPKKAED). 3 cysteine pairs are disulfide-bonded: Cys139–Cys203, Cys181–Cys231, and Cys191–Cys233. N-linked (GlcNAc...) asparagine glycosylation is present at Asn147.

This sequence belongs to the NGF-beta family. Homodimer; non-covalently linked. In terms of tissue distribution, expressed by the venom gland.

The protein resides in the secreted. In terms of biological role, nerve growth factor is important for the development and maintenance of the sympathetic and sensory nervous systems. It stimulates division and differentiation of sympathetic and embryonic sensory neurons as well as basal forebrain cholinergic neurons in the brain. Its relevance in the snake venom is not clear. However, it has been shown to inhibit metalloproteinase-dependent proteolysis of platelet glycoprotein Ib alpha, suggesting a metalloproteinase inhibition to prevent metalloprotease autodigestion and/or protection against prey proteases. Binds a lipid between the two protein chains in the homodimer. The lipid-bound form promotes histamine relase from mouse mast cells, contrary to the lipid-free form. The sequence is that of Venom nerve growth factor 1 from Demansia vestigiata (Lesser black whip snake).